A 147-amino-acid polypeptide reads, in one-letter code: Hemoglobin subunit gamma (147 aa).

The 145-residue stretch at 3-147 (NFTAEDKAAI…VASALASRYH (145 aa)) folds into the Globin domain. The heme b site is built by His-64 and His-93.

This sequence belongs to the globin family. As to quaternary structure, heterotetramer of two alpha chains and two gamma chains in fetal hemoglobin (Hb F). As to expression, red blood cells.

Functionally, gamma chains make up the fetal hemoglobin F, in combination with alpha chains. This Lagothrix lagotricha (Brown woolly monkey) protein is Hemoglobin subunit gamma (HBG).